The chain runs to 158 residues: 2-C-methyl-D-erythritol 2,4-cyclodiphosphate synthase (158 aa).

Asp9 and His11 together coordinate a divalent metal cation. 4-CDP-2-C-methyl-D-erythritol 2-phosphate-binding positions include 9–11 and 35–36; these read DVH and HS. His43 contributes to the a divalent metal cation binding site. Residues 57-59, 62-66, 101-107, 133-136, Phe140, and Arg143 each bind 4-CDP-2-C-methyl-D-erythritol 2-phosphate; these read DIG, FPDTD, AQAPKMA, and TTTE.

It belongs to the IspF family. Homotrimer. The cofactor is a divalent metal cation.

It carries out the reaction 4-CDP-2-C-methyl-D-erythritol 2-phosphate = 2-C-methyl-D-erythritol 2,4-cyclic diphosphate + CMP. The protein operates within isoprenoid biosynthesis; isopentenyl diphosphate biosynthesis via DXP pathway; isopentenyl diphosphate from 1-deoxy-D-xylulose 5-phosphate: step 4/6. Involved in the biosynthesis of isopentenyl diphosphate (IPP) and dimethylallyl diphosphate (DMAPP), two major building blocks of isoprenoid compounds. Catalyzes the conversion of 4-diphosphocytidyl-2-C-methyl-D-erythritol 2-phosphate (CDP-ME2P) to 2-C-methyl-D-erythritol 2,4-cyclodiphosphate (ME-CPP) with a corresponding release of cytidine 5-monophosphate (CMP). In Vibrio vulnificus (strain YJ016), this protein is 2-C-methyl-D-erythritol 2,4-cyclodiphosphate synthase.